A 450-amino-acid polypeptide reads, in one-letter code: Serine/threonine-protein kinase-transforming protein Rmil (450 aa).

Basic and acidic residues-rich tracts occupy residues 1 to 14 (MEAV…DQGV) and 49 to 73 (QRER…RDSS). The interval 1–80 (MEAVIKDLIR…DSSDDWEIPD (80 aa)) is disordered. Positions 83–343 (ITVGQRIGSG…PQILASIELL (261 aa)) constitute a Protein kinase domain. ATP is bound by residues 89–97 (IGSGSFGTV) and Lys109. Asp202 (proton acceptor) is an active-site residue.

Belongs to the protein kinase superfamily. TKL Ser/Thr protein kinase family. RAF subfamily.

The enzyme catalyses L-seryl-[protein] + ATP = O-phospho-L-seryl-[protein] + ADP + H(+). It catalyses the reaction L-threonyl-[protein] + ATP = O-phospho-L-threonyl-[protein] + ADP + H(+). This is Serine/threonine-protein kinase-transforming protein Rmil (V-RMIL) from Avian rous-associated virus type 1.